A 134-amino-acid chain; its full sequence is UPF0412 protein YaaI (134 aa).

The signal sequence occupies residues methionine 1–alanine 23.

Belongs to the UPF0412 family.

This chain is UPF0412 protein YaaI, found in Salmonella choleraesuis (strain SC-B67).